A 775-amino-acid chain; its full sequence is WD repeat-containing protein pop1 (775 aa).

An F-box domain is found at 298–345; that stretch reads KNFLTGFPAEITNLVLTHLDAPSLCAVSQVSHHWYKLVSSNEELWKSL. WD repeat units follow at residues 444–472, 484–538, 575–603, 615–645, and 657–687; these read EHEG…RVWD, GHTS…RLWS, GHTD…RVWK, GHVG…RIWN, and GHSN…RVWD.

In terms of assembly, homodimer and heterodimer with pop2. Binds to cdc18, phosphorylated cig2, cul1, pip1 and skp1.

It is found in the nucleus. In terms of biological role, involved in maintenance of ploidy through proteasome dependent degradation of CDK inhibitor rum1 and S-phase initiator cdc18. Functions as a recognition factor for rum1 and cdc18, which are subsequently ubiquitinated and targeted to the 26S proteasome for degradation. Together with pop2, required for cig2 instability during G2 and M phase and cig2 degradation in exponentially growing cells. Regulates cell-cycle progression under starvation through the rum1 protein. The protein is WD repeat-containing protein pop1 (pop1) of Schizosaccharomyces pombe (strain 972 / ATCC 24843) (Fission yeast).